The chain runs to 373 residues: Bilirubin reductase (373 aa).

Glutamine 92 contributes to the FMN binding site. Residue arginine 168 is the Proton donor of the active site. FMN is bound at residue lysine 215. Residues cysteine 344, cysteine 347, cysteine 351, and cysteine 363 each coordinate [4Fe-4S] cluster.

This sequence belongs to the NADH:flavin oxidoreductase/NADH oxidase family. It depends on FMN as a cofactor. Requires [4Fe-4S] cluster as cofactor.

It catalyses the reaction urobilinogen + 4 A = (4Z,15Z)-bilirubin IXalpha + 4 AH2. The catalysed reaction is urobilinogen + 2 A = (4Z,15Z)-mesobilirubin IXalpha + 2 AH2. It functions in the pathway porphyrin-containing compound metabolism; protoheme degradation. Bilirubin reductase that catalyzes reduction of mesobilirubin and/or bilirubin to urobilinogen, a key step during heme degradation. Cooperates with BilS, which is probably involved in electron transfer for BilR. Urobilinogen then spontaneously degrades into urobilin, which gives urine its distinctive yellow color. The polypeptide is Bilirubin reductase (Clostridium symbiosum (strain WAL-14163)).